The following is a 1733-amino-acid chain: Polyketide synthase Pks13 (1733 aa).

The region spanning glutamate 17–glutamate 95 is the Carrier 1 domain. At serine 55 the chain carries O-(pantetheine 4'-phosphoryl)serine. Residues arginine 116–glutamate 541 form the Ketosynthase family 3 (KS3) domain. The active-site Acyl-thioester intermediate; for beta-ketoacyl synthase activity is the cysteine 287. Catalysis depends on for beta-ketoacyl synthase activity residues histidine 423 and histidine 463. Over residues valine 548–alanine 560 the composition is skewed to basic and acidic residues. Residues valine 548–alanine 567 are disordered. Positions valine 713–valine 1034 are acyltransferase. Catalysis depends on serine 801, which acts as the Acyl-ester intermediate; for acyltransferase activity. Residues glutamate 1232–arginine 1309 form the Carrier 2 domain. Serine 1266 carries the post-translational modification O-(pantetheine 4'-phosphoryl)serine. Positions proline 1344–alanine 1368 are disordered. The segment at proline 1470–arginine 1563 is thioesterase-like. The active-site For thioesterase-like activity is serine 1533.

In terms of processing, 4'-phosphopantetheine is transferred from CoA to specific serines of apo-Pks13 by PptT.

The protein operates within lipid metabolism; mycolic acid biosynthesis. The presence of FadD32 is necessary for the transfer of the acyl chain from the AMP carrier onto Pks13. Involved in the biosynthesis of mycolic acids. Forms, with FadD32, the initiation module of the mycolic condensation system. Synthesizes, in coupled reaction with FadD32, the biosynthetic precursors of mycolic acids, alpha-alkyl beta-ketoacids, via the condensation of two long chain fatty acid derivatives, a very long meromycoloyl-AMP and a shorter 2-carboxyacyl-CoA. The acyl chain of the acyl-AMP produced by FadD32 is specifically transferred onto the N-terminal ACP domain of Pks13, and then transferred onto the KS domain. The extender unit carboxyacyl-CoA is specifically loaded onto the AT domain, which catalyzes the covalent attachment of the carboxyacyl chain to its active site, and its subsequent transfer onto the P-pant arm of the C-terminal ACP domain. The KS domain catalyzes the condensation between the two loaded fatty acyl chains to produce an alpha-alkyl beta-ketothioester linked to the C-ACP domain. Then, the thioesterase-like domain acts as a transacylase and is responsible for both the release and the transfer of the alpha-alkyl beta-ketoacyl chain onto a polyol acceptor molecule, particularly trehalose, leading to the formation of the trehalose monomycolate precursor. The polypeptide is Polyketide synthase Pks13 (Mycobacterium tuberculosis (strain ATCC 25618 / H37Rv)).